The sequence spans 138 residues: Membrane protein P8A7 (138 aa).

4 consecutive transmembrane segments (helical) span residues 12–30 (ILVI…YLFV), 32–56 (GLFH…IVLL), 71–90 (YTYW…LILG), and 93–118 (GFFL…LLGC).

It localises to the membrane. This is Membrane protein P8A7 (pmpA) from Dictyostelium discoideum (Social amoeba).